A 138-amino-acid polypeptide reads, in one-letter code: Iron sulfur cluster assembly protein 1 (138 aa).

It belongs to the NifU family. As to quaternary structure, component of the core Fe-S cluster (ISC) assembly machinery. The cofactor is [2Fe-2S] cluster.

It localises to the cytoplasm. It participates in cofactor biosynthesis; iron-sulfur cluster biosynthesis. In terms of biological role, scaffold protein for the de novo synthesis of iron-sulfur (Fe-S) clusters within mitosomes, which is required for maturation of both [2Fe-2S] and [4Fe-4S] proteins. First, a [2Fe-2S] cluster is transiently assembled on the scaffold protein ISU1. In a second step, the cluster is released from ISU1, transferred to a glutaredoxin, followed by the formation of [2Fe-2S] proteins, the synthesis of [4Fe-4S] clusters and their target-specific insertion into the recipient apoproteins. Cluster assembly on ISU1 depends on the function of the cysteine desulfurase complex NFS1-ISD11, which serves as the sulfur donor for cluster synthesis, the iron-binding protein frataxin as the putative iron donor, and the electron transfer chain comprised of ferredoxin reductase and ferredoxin, which receive their electrons from NADH. The polypeptide is Iron sulfur cluster assembly protein 1 (ISU1) (Trachipleistophora hominis (Microsporidian parasite)).